The following is a 1366-amino-acid chain: MLSFVDTRTLLLLAVTSCLATCQSLQEATARKGPTGDRGPRGERGPPGPPGRDGDDGIPGPPGPPGPPGPPGLGGNFAAQYDGKGVGLGPGPMGLMGPRGPPGASGAPGPQGFQGPAGEPGEPGQTGPAGARGPPGPPGKAGEDGHPGKPGRPGERGVVGPQGARGFPGTPGLPGFKGIRGHNGLDGLKGQPGAPGVKGEPGAPGENGTPGQTGARGLPGERGRVGAPGPAGARGSDGSVGPVGPAGPIGSAGPPGFPGAPGPKGEIGPVGNPGPAGPAGPRGEVGLPGVSGPVGPPGNPGANGLTGAKGAAGLPGVAGAPGLPGPRGIPGPVGAAGATGARGIVGEPGPAGSKGESGNKGEPGSAGAQGPPGPSGEEGKRGPNGEAGSAGPSGPPGLRGSPGSRGLPGADGPAGVMGPPGPRGATGPAGVRGPNGDSGRPGEPGLMGPRGFPGAPGNVGPAGKEGPMGLPGIDGRPGPIGPAGARGEPGNIGFPGPKGPTGDPGKNGDKGHAGLAGARGAPGPDGNNGAQGPPGPQGVQGGKGEQGPAGPPGFQGLPGPAGTAGEVGKPGERGLPGEFGLPGPAGPRGERGPPGESGAAGPSGPIGSRGPSGPPGPDGNKGEPGVLGAPGTAGASGPGGLPGERGAAGIPGGKGEKGETGLRGEIGNPGRDGARGAPGAMGAPGPAGATGDRGEAGPAGPAGPAGPRGTPGERGEVGPAGPNGFAGPAGAAGQPGAKGERGTKGPKGENGPVGPTGPIGSAGPSGPNGPPGPAGSRGDGGPPGATGFPGAAGRTGPPGPSGITGPPGPPGAAGKEGLRGPRGDQGPVGRTGETGASGPPGFTGEKGPSGEPGTAGPPGTPGPQGLLGAPGILGLPGSRGERGLPGVAGSVGEPGPLGIAGPPGARGPPGAVGAPGVNGAPGEAGRDGNPGNDGPPGRDGQAGHKGERGYPGNIGPVGAVGAPGPHGPVGPTGKHGNRGEPGPAGSVGPVGAVGPRGPSGPQGIRGDKGEPGEKGPRGLPGLKGHNGLQGLPGLAGQHGDQGAPGSVGPAGPRGPAGPSGPAGKDGRTGQPGTVGPAGIRGSQGSQGPAGPPGPPGPPGPPGPSGGGYDFGYEGDFYRADQPRSPPSLRPKDYEVDATLKSLNNQIETLLTPEGSRKNPARTCRDLRLSHPEWSSGYYWIDPNQGCTMDAIKVYCDFSTGETCIRAQPENIPAKNWYRNSKVKKHIWLGETINGGTQFEYNVEGVTTKEMATQLAFMRLLANHASQNITYHCKNSIAYMDEETGNLKKAVILQGSNDVELVAEGNSRFTYTVLVDGCSKKTNEWRKTIIEYKTNKPSRLPILDIAPLDIGDADQEFRVDVGPVCFK.

The N-terminal stretch at 1–22 (MLSFVDTRTLLLLAVTSCLATC) is a signal peptide. A Pyrrolidone carboxylic acid modification is found at glutamine 23. The propeptide at 23–79 (QSLQEATARKGPTGDRGPRGERGPPGPPGRDGDDGIPGPPGPPGPPGPPGLGGNFAA) is N-terminal propeptide. The interval 27–1131 (EATARKGPTG…PRSPPSLRPK (1105 aa)) is disordered. The span at 34 to 44 (PTGDRGPRGER) shows a compositional bias: basic and acidic residues. Residues 59-71 (PGPPGPPGPPGPP) are compositionally biased toward pro residues. Lysine 84 bears the Allysine mark. Residues 84–94 (KGVGLGPGPMG) are compositionally biased toward gly residues. The span at 95–132 (LMGPRGPPGASGAPGPQGFQGPAGEPGEPGQTGPAGAR) shows a compositional bias: low complexity. Residues 141–155 (AGEDGHPGKPGRPGE) are compositionally biased toward basic and acidic residues. At lysine 177 the chain carries 5-hydroxylysine; alternate. An O-linked (Gal...) hydroxylysine; alternate glycan is attached at lysine 177. Composition is skewed to low complexity over residues 225–254 (VGAPGPAGARGSDGSVGPVGPAGPIGSAGP), 279–293 (AGPRGEVGLPGVSGP), 300–321 (PGANGLTGAKGAAGLPGVAGAP), 330–345 (PGPVGAAGATGARGIV), 384–408 (NGEAGSAGPSGPPGLRGSPGSRGLP), 423–434 (RGATGPAGVRGP), 470–489 (LPGIDGRPGPIGPAGARGEP), and 513–531 (AGLAGARGAPGPDGNNGAQ). Gly residues predominate over residues 538–547 (GVQGGKGEQG). Residues 594–611 (PGESGAAGPSGPIGSRGP) show a composition bias toward low complexity. The span at 634-643 (GASGPGGLPG) shows a compositional bias: gly residues. Low complexity-rich tracts occupy residues 668-690 (NPGRDGARGAPGAMGAPGPAGAT) and 717-737 (VGPAGPNGFAGPAGAAGQPGA). The segment covering 738-747 (KGERGTKGPK) has biased composition (basic and acidic residues). Over residues 756–765 (TGPIGSAGPS) the composition is skewed to low complexity. Residues 775–784 (GSRGDGGPPG) are compositionally biased toward gly residues. Composition is skewed to low complexity over residues 785-795 (ATGFPGAAGRT), 863-876 (PQGLLGAPGILGLP), 893-932 (EPGPLGIAGPPGARGPPGAVGAPGVNGAPGEAGRDGNPGN), 951-974 (PGNIGPVGAVGAPGPHGPVGPTGK), and 981-1001 (PGPAGSVGPVGAVGPRGPSGP). Positions 1005–1016 (RGDKGEPGEKGP) are enriched in basic and acidic residues. A compositionally biased stretch (pro residues) spans 1089-1103 (AGPPGPPGPPGPPGP). Positions 1120–1366 (DQPRSPPSLR…RVDVGPVCFK (247 aa)) are cleaved as a propeptide — C-terminal propeptide. The Fibrillar collagen NC1 domain maps to 1133 to 1366 (YEVDATLKSL…RVDVGPVCFK (234 aa)). 3 cysteine pairs are disulfide-bonded: cysteine 1163-cysteine 1195, cysteine 1203-cysteine 1364, and cysteine 1272-cysteine 1317. 5 residues coordinate Ca(2+): aspartate 1181, asparagine 1183, glutamine 1184, cysteine 1186, and aspartate 1189.

This sequence belongs to the fibrillar collagen family. In terms of assembly, trimers of one alpha 2(I) and two alpha 1(I) chains. Interacts (via C-terminus) with TMEM131 (via PapD-L domain); the interaction is direct and is involved in assembly and TRAPPIII ER-to-Golgi transport complex-dependent secretion of collagen. Prolines at the third position of the tripeptide repeating unit (G-X-Y) are hydroxylated in some or all of the chains. Forms the fibrils of tendon, ligaments and bones. In bones the fibrils are mineralized with calcium hydroxyapatite.

It localises to the secreted. Its subcellular location is the extracellular space. It is found in the extracellular matrix. Its function is as follows. Type I collagen is a member of group I collagen (fibrillar forming collagen). The polypeptide is Collagen alpha-2(I) chain (COL1A2) (Canis lupus familiaris (Dog)).